Consider the following 360-residue polypeptide: Peptide chain release factor 1 (360 aa).

An N5-methylglutamine modification is found at Gln-235.

The protein belongs to the prokaryotic/mitochondrial release factor family. In terms of processing, methylated by PrmC. Methylation increases the termination efficiency of RF1.

The protein localises to the cytoplasm. In terms of biological role, peptide chain release factor 1 directs the termination of translation in response to the peptide chain termination codons UAG and UAA. The protein is Peptide chain release factor 1 of Bordetella parapertussis (strain 12822 / ATCC BAA-587 / NCTC 13253).